A 43-amino-acid polypeptide reads, in one-letter code: Protein PsbN (43 aa).

The chain crosses the membrane as a helical span at residues 5-27 (TLIAISISGLIVSFTGYALYTAF).

Belongs to the PsbN family.

It localises to the plastid. The protein resides in the chloroplast thylakoid membrane. Functionally, may play a role in photosystem I and II biogenesis. The protein is Protein PsbN of Cicer arietinum (Chickpea).